A 651-amino-acid polypeptide reads, in one-letter code: 120 kDa Glycoprotein O (651 aa).

The signal sequence occupies residues 1–56 (MHLEVIVQSYKKSKYYFSHTFYLYKFIVVNSPDMLHISQLGLFLGLFAIVMHSANL). N-linked (GlcNAc...) asparagine; by host glycans are attached at residues N74, N97, N147, N208, N223, N234, and N254. A compositionally biased stretch (low complexity) spans 275 to 292 (SSTSASLTSPHIPSTNIP). Positions 275–303 (SSTSASLTSPHIPSTNIPTPEPPPVTKNS) are disordered. N-linked (GlcNAc...) asparagine; by host glycosylation is found at N302, N355, N378, N395, N469, N502, N520, N546, N603, N620, and N631.

The protein belongs to the herpesviridae U47 family. In terms of assembly, part of a gH-gL-gO complex. Post-translationally, a shorter mature protein, gO-80K, is produced probably by proteolytic cleavage. Modified with high mannose-oligosaccharides. In terms of processing, N-glycosylated with complex glycans.

The protein localises to the virion. Its subcellular location is the host cell membrane. The polypeptide is 120 kDa Glycoprotein O (U47) (Homo sapiens (Human)).